The sequence spans 780 residues: Neutral ceramidase (780 aa).

At 1 to 12 the chain is on the cytoplasmic side; it reads MAKRTFSNLETF. A helical; Signal-anchor for type II membrane protein transmembrane segment spans residues 13-33; sequence LIFLLVMMSAITVALLSLLFI. The Lumenal segment spans residues 34–780; it reads TSGTIENHKD…TSPAFEVVTI (747 aa). Positions 47-90 are disordered; that stretch reads HFFSTTQSPPATQGSTAAQRSTATQHSTATQSSTATQTSPVPLT. Residues 57-85 show a composition bias toward low complexity; sequence ATQGSTAAQRSTATQHSTATQSSTATQTS. Thr62 is a glycosylation site (O-linked (GalNAc...) threonine). Ser67 carries an O-linked (GalNAc...) serine glycan. 2 O-linked (GalNAc...) threonine glycosylation sites follow: Thr68 and Thr70. The O-linked (GalNAc...) serine glycan is linked to Ser73. Residues Thr74 and Thr76 are each glycosylated (O-linked (GalNAc...) threonine). Residues Ser78 and Ser79 are each glycosylated (O-linked (GalNAc...) serine). Thr80, Thr82, and Thr84 each carry an O-linked (GalNAc...) threonine glycan. A glycan (N-linked (GlcNAc...) asparagine) is linked at Asn98. Leu134 lines the Ca(2+) pocket. An N-linked (GlcNAc...) asparagine glycan is attached at Asn151. His194 serves as a coordination point for Zn(2+). Asn217 is a glycosylation site (N-linked (GlcNAc...) asparagine). Residue His303 coordinates Zn(2+). Asn308 carries N-linked (GlcNAc...) asparagine glycosylation. The active-site Nucleophile is Ser354. 2 cysteine pairs are disulfide-bonded: Cys362–Cys376 and Cys369–Cys384. Asn440 and Asn468 each carry an N-linked (GlcNAc...) asparagine glycan. Cys448 and Cys498 are joined by a disulfide. Glu540 serves as a coordination point for Zn(2+). N-linked (GlcNAc...) asparagine glycosylation is present at Asn564. Tyr579 lines the Zn(2+) pocket. 3 residues coordinate Ca(2+): Asp712, Ser714, and Thr717. A glycan (N-linked (GlcNAc...) asparagine) is linked at Asn730. A required for correct folding and localization region spans residues 770 to 780; that stretch reads GTSPAFEVVTI. Residue Thr779 is glycosylated (O-linked (GalNAc...) threonine).

Belongs to the neutral ceramidase family. Requires Zn(2+) as cofactor. Proteolytic cleavage of the N-terminus removes the signal-anchor and produces a soluble form of the protein. Post-translationally, N-glycosylated. Required for enzyme activity. In terms of processing, O-glycosylated. Required to retain it as a type II membrane protein at the cell surface. Phosphorylated. May prevent ubiquitination and subsequent degradation. Post-translationally, ubiquitinated, leading to its degradation by the proteasome. Ubiquitination is triggered by nitric oxide. As to expression, primarily expressed in intestine. Ubiquitously expressed with higher levels in kidney, skeletal muscle and heart. The ubiquitous expression observed for ASAH2 might be an experimental artifact due to the paralog ASAH2B.

The protein resides in the cell membrane. The protein localises to the membrane raft. It localises to the membrane. It is found in the caveola. Its subcellular location is the golgi apparatus membrane. The protein resides in the mitochondrion. The protein localises to the secreted. It localises to the extracellular exosome. It carries out the reaction an N-acylsphing-4-enine + H2O = sphing-4-enine + a fatty acid. It catalyses the reaction N-dodecanoylsphing-4-enine + H2O = dodecanoate + sphing-4-enine. The catalysed reaction is N-hexadecanoylsphing-4-enine + H2O = sphing-4-enine + hexadecanoate. The enzyme catalyses N-octanoylsphing-4-enine + H2O = octanoate + sphing-4-enine. It carries out the reaction N-(hexanoyl)sphing-4-enine + H2O = hexanoate + sphing-4-enine. It catalyses the reaction N-octadecanoylsphing-4-enine + H2O = sphing-4-enine + octadecanoate. The catalysed reaction is N-tetradecanoylsphing-4-enine + H2O = tetradecanoate + sphing-4-enine. The enzyme catalyses N-(9Z-octadecenoyl)-sphing-4-enine + H2O = sphing-4-enine + (9Z)-octadecenoate. It carries out the reaction N-(15Z-tetracosenoyl)-sphing-4-enine + H2O = (15Z)-tetracosenoate + sphing-4-enine. It catalyses the reaction sphinganine + hexadecanoate = N-hexadecanoylsphinganine + H2O. The catalysed reaction is N-(octadecanoyl)-sphinganine + H2O = sphinganine + octadecanoate. It functions in the pathway lipid metabolism; sphingolipid metabolism. Its activity is regulated as follows. Inhibited by dithiothreitol (DTT) and 2-mercaptoethanol. Activity is mildly stimulated by Ca(2+) and Mg(2+), but is not inhibited by EDTA. Activity is inhibited by millimolar levels of Fe(2+), Zn(2+) and Cu(2+). Inhibited by cholesterol. Its function is as follows. Plasma membrane ceramidase that hydrolyzes sphingolipid ceramides into sphingosine and free fatty acids at neutral pH. Ceramides, sphingosine, and its phosphorylated form sphingosine-1-phosphate are bioactive lipids that mediate cellular signaling pathways regulating several biological processes including cell proliferation, apoptosis and differentiation. Also catalyzes the reverse reaction allowing the synthesis of ceramides from fatty acids and sphingosine. Together with sphingomyelinase, participates in the production of sphingosine and sphingosine-1-phosphate from the degradation of sphingomyelin, a sphingolipid enriched in the plasma membrane of cells. Also participates in the hydrolysis of ceramides from the extracellular milieu allowing the production of sphingosine-1-phosphate inside and outside cells. This is the case for instance with the digestion of dietary sphingolipids in the intestinal tract. This is Neutral ceramidase (ASAH2) from Homo sapiens (Human).